Consider the following 397-residue polypeptide: Succinyl-diaminopimelate desuccinylase (397 aa).

H73 serves as a coordination point for Zn(2+). D75 is a catalytic residue. Position 106 (D106) interacts with Zn(2+). E140 functions as the Proton acceptor in the catalytic mechanism. Zn(2+) contacts are provided by E141, E169, and H366.

It belongs to the peptidase M20A family. DapE subfamily. As to quaternary structure, homodimer. Zn(2+) serves as cofactor. Requires Co(2+) as cofactor.

It carries out the reaction N-succinyl-(2S,6S)-2,6-diaminopimelate + H2O = (2S,6S)-2,6-diaminopimelate + succinate. The protein operates within amino-acid biosynthesis; L-lysine biosynthesis via DAP pathway; LL-2,6-diaminopimelate from (S)-tetrahydrodipicolinate (succinylase route): step 3/3. Catalyzes the hydrolysis of N-succinyl-L,L-diaminopimelic acid (SDAP), forming succinate and LL-2,6-diaminopimelate (DAP), an intermediate involved in the bacterial biosynthesis of lysine and meso-diaminopimelic acid, an essential component of bacterial cell walls. In Sinorhizobium medicae (strain WSM419) (Ensifer medicae), this protein is Succinyl-diaminopimelate desuccinylase.